The sequence spans 513 residues: Glycogen synthase (513 aa).

Residue Lys47 coordinates ADP-alpha-D-glucose.

This sequence belongs to the glycosyltransferase 1 family. Bacterial/plant glycogen synthase subfamily.

The enzyme catalyses [(1-&gt;4)-alpha-D-glucosyl](n) + ADP-alpha-D-glucose = [(1-&gt;4)-alpha-D-glucosyl](n+1) + ADP + H(+). Its pathway is glycan biosynthesis; glycogen biosynthesis. Synthesizes alpha-1,4-glucan chains using ADP-glucose. This is Glycogen synthase from Pseudomonas aeruginosa (strain ATCC 15692 / DSM 22644 / CIP 104116 / JCM 14847 / LMG 12228 / 1C / PRS 101 / PAO1).